The following is a 235-amino-acid chain: H2HPP isomerase (235 aa).

Cupin type-2 domains are found at residues 41-106 (VPPH…AIDI) and 151-216 (KIPG…KSIN). H50, H52, Q56, H91, H162, H164, Q168, and H202 together coordinate a divalent metal cation. Y223 contacts substrate.

In terms of assembly, monomer. Fe(2+) serves as cofactor. It depends on Co(2+) as a cofactor.

The protein localises to the cytoplasm. It catalyses the reaction 3-[(4R)-4-hydroxycyclohexa-1,5-dien-1-yl]-2-oxopropanoate = 3-[(1E,4R)-4-hydroxycyclohex-2-en-1-ylidene]pyruvate. The protein operates within antibiotic biosynthesis; bacilysin biosynthesis. In terms of biological role, part of the bacABCDEF operon responsible for the biosynthesis of the nonribosomally synthesized dipeptide antibiotic bacilysin, composed of L-alanine and L-anticapsin. Bacilysin is an irreversible inactivator of the glutaminase domain of glucosamine synthetase. BacB catalyzes the allylic isomerization of the endocyclic-delta(4),delta(8)-7R-dihydro-hydroxyphenylpyruvate (en-H2HPP) to generate a mixture of 3E,7R- and 3Z, 7R-olefins (E/Z ration of 3/1) of the exocyclic-delta(3),delta(5)-dihydro-hydroxyphenylpyruvate (ex-H2HPP). The chain is H2HPP isomerase from Bacillus subtilis (strain 168).